Here is a 169-residue protein sequence, read N- to C-terminus: Transcription regulatory protein SNF11 (169 aa).

The interval 1–24 is disordered; sequence MSSEIAYSNTNTNTENENRNTGAG. N-acetylserine is present on Ser-2. Residues 9 to 21 show a composition bias toward low complexity; the sequence is NTNTNTENENRNT. 8 consecutive repeat copies span residues 28 to 31, 32 to 35, 36 to 39, 40 to 43, 44 to 47, 48 to 51, 76 to 80, and 160 to 165. The 6 X 4 AA tandem repeats of N-[AT]-[NT]-A stretch occupies residues 28 to 51; the sequence is NTNANANANATANATANATANATA. Residues 76–165 are 2 X 5 AA repeats of L-L-A-R-V; it reads LLARVIQMNN…SKLYLLLARV (90 aa).

Component of the SWI/SNF global transcription activator complex. The 1.14 MDa SWI/SNF complex is composed of 11 different subunits: one copy each of SWI1, SNF2/SWI2, SNF5, SNF12/SWP73, ARP7/SWP61, ARP9/SWP59; two copies each of SWI3, SNF6, SNF11, SWP82; and three copies of TAF14/SWP29.

The protein localises to the nucleus. Its function is as follows. Involved in transcriptional activation. Component of the SWI/SNF complex, an ATP-dependent chromatin remodeling complex, which is required for the positive and negative regulation of gene expression of a large number of genes. It changes chromatin structure by altering DNA-histone contacts within a nucleosome, leading eventually to a change in nucleosome position, thus facilitating or repressing binding of gene-specific transcription factors. This chain is Transcription regulatory protein SNF11 (SNF11), found in Saccharomyces cerevisiae (strain ATCC 204508 / S288c) (Baker's yeast).